We begin with the raw amino-acid sequence, 221 residues long: Translation initiation factor 6 (221 aa).

The protein belongs to the eIF-6 family.

Functionally, binds to the 50S ribosomal subunit and prevents its association with the 30S ribosomal subunit to form the 70S initiation complex. This Methanopyrus kandleri (strain AV19 / DSM 6324 / JCM 9639 / NBRC 100938) protein is Translation initiation factor 6.